A 1014-amino-acid chain; its full sequence is EMILIN-1-A (1014 aa).

Residues 1–27 (MALYFVYLSTLLALILLGDNWAAGTYA) form the signal peptide. The 76-residue stretch at 53-128 (HRNWCAYVVT…HGYSGDDCSD (76 aa)) folds into the EMI domain. Cystine bridges form between C57/C118, C84/C89, and C117/C126. 2 disordered regions span residues 125–150 (DCSDGSSAIHDSRARPTGEEGRSDSD) and 811–869 (QDFT…ANVP). A compositionally biased stretch (basic and acidic residues) spans 134 to 150 (HDSRARPTGEEGRSDSD). The stretch at 145–179 (GRSDSDRIRQLEEQIQSLNKNLHNLQKKIYEESQR) forms a coiled coil. A Collagen-like domain is found at 815 to 865 (GPPGLPGPQGEKGSKGPPGPRGPLGKEGPQGRVGPVGPPGLRGEQGPPGKD). Positions 840 to 856 (KEGPQGRVGPVGPPGLR) are enriched in low complexity. A C1q domain is found at 866-1012 (ANVPRLSFSA…GMLLYEESED (147 aa)).

Its subcellular location is the secreted. It is found in the extracellular space. The protein localises to the extracellular matrix. Functionally, may be responsible for anchoring smooth muscle cells to elastic fibers, and may be involved not only in the formation of the elastic fiber, but also in the processes that regulate vessel assembly. Has cell adhesive capacity. The chain is EMILIN-1-A from Danio rerio (Zebrafish).